The chain runs to 277 residues: MKKPVDFFAMKENGEKITMITAYDYPSAKNVEQAEADMILVGDSLGMVVLGYDSTVPVTMDDMIHHTKAVKRGAPDTFVVTDMPFMTYHGSVDETIQNARKIIQESGAHAVKLEGAGEVVNKIARLTEAGAPVVAHLGLTPQSVGLTGSYKVRAKSAQEAQELMDNALAVEAAGAIAIVLEAIPRQLAEKVSKALSIPTIGIGAGVETDGQVLVYHDIIGYGISRRAKFVKAYAEIDETIEPALASYVKEVKAATFPEVKHSFTMAEEDLKGLYGRE.

Mg(2+) contacts are provided by Asp-43 and Asp-82. 3-methyl-2-oxobutanoate-binding positions include 43 to 44 (DS), Asp-82, and Lys-112. Glu-114 serves as a coordination point for Mg(2+). The active-site Proton acceptor is Glu-181.

Belongs to the PanB family. Homodecamer; pentamer of dimers. It depends on Mg(2+) as a cofactor.

The protein localises to the cytoplasm. It catalyses the reaction 3-methyl-2-oxobutanoate + (6R)-5,10-methylene-5,6,7,8-tetrahydrofolate + H2O = 2-dehydropantoate + (6S)-5,6,7,8-tetrahydrofolate. It functions in the pathway cofactor biosynthesis; (R)-pantothenate biosynthesis; (R)-pantoate from 3-methyl-2-oxobutanoate: step 1/2. Catalyzes the reversible reaction in which hydroxymethyl group from 5,10-methylenetetrahydrofolate is transferred onto alpha-ketoisovalerate to form ketopantoate. The protein is 3-methyl-2-oxobutanoate hydroxymethyltransferase of Listeria monocytogenes serotype 4a (strain HCC23).